Here is a 94-residue protein sequence, read N- to C-terminus: Large ribosomal subunit protein uL23 (94 aa).

The protein belongs to the universal ribosomal protein uL23 family. As to quaternary structure, part of the 50S ribosomal subunit. Contacts protein L29, and trigger factor when it is bound to the ribosome.

In terms of biological role, one of the early assembly proteins it binds 23S rRNA. One of the proteins that surrounds the polypeptide exit tunnel on the outside of the ribosome. Forms the main docking site for trigger factor binding to the ribosome. In Mycoplasma mycoides subsp. mycoides SC (strain CCUG 32753 / NCTC 10114 / PG1), this protein is Large ribosomal subunit protein uL23.